We begin with the raw amino-acid sequence, 278 residues long: Thioredoxin-related transmembrane protein 1 (278 aa).

The N-terminal stretch at 1-26 (MAHLGRLMVPLAALVLLLWAVPGAHG) is a signal peptide. A Thioredoxin domain is found at 27 to 132 (RRNNVRVLTD…FINFVSDKEW (106 aa)). Over 27 to 181 (RRNNVRVLTD…DLGIPAWGSY (155 aa)) the chain is Extracellular. Residues C56 and C59 each act as nucleophile in the active site. A disulfide bond links C56 and C59. The chain crosses the membrane as a helical span at residues 182 to 202 (LVFAFATVLSGLLLGLCMIFV). Residues 203-278 (ADCLCPSKRR…VGLPSATDTS (76 aa)) lie on the Cytoplasmic side of the membrane. S-palmitoyl cysteine attachment occurs at residues C205 and C207. The segment covering 217 to 226 (QYAKKTSPEF) has biased composition (polar residues). The segment at 217–278 (QYAKKTSPEF…VGLPSATDTS (62 aa)) is disordered. Residues 235-251 (EEQEADEEDVSEEEAED) show a composition bias toward acidic residues. Residues S245 and S278 each carry the phosphoserine modification.

In terms of assembly, interacts with ATP2A2. In terms of processing, palmitoylated; palmitoylation is required for localization to mitochondria-associated endoplasmic reticulum membrane (MAM).

The protein resides in the endoplasmic reticulum membrane. Its subcellular location is the mitochondrion membrane. The protein localises to the secreted. It catalyses the reaction Catalyzes the rearrangement of -S-S- bonds in proteins.. Thiredoxin domain-containing protein that participates in various redox reactions through the reversible oxidation of its active center dithiol to a disulfide and catalyze dithiol-disulfide exchange reactions. Acts as a key inhibitor of the alternative triglyceride biosynthesis pathway by inhibiting the activity of TMEM68/DIESL at the endoplasmic reticulum, thereby restricting accumulation of triacylglycerol. The alternative triglyceride biosynthesis pathway mediates formation of triacylglycerol from diacylglycerol and membrane phospholipids. Acts as a protein disulfide isomerase by catalyzing formation or reduction of disulfide bonds. Specifically mediates formation of disulfide bonds of transmembrane proteins at the endoplasmic reticulum membrane. Involved in ER-associated degradation (ERAD) via its protein disulfide isomerase activity by acting on folding-defective polypeptides at the endoplasmic reticulum membrane. Acts as a negative regulator of platelet aggregation following secretion in the extracellular space. Acts as a regulator of endoplasmic reticulum-mitochondria contact sites via its ability to regulate redox signals. Regulates endoplasmic reticulum-mitochondria Ca(2+) flux. The polypeptide is Thioredoxin-related transmembrane protein 1 (Mus musculus (Mouse)).